A 447-amino-acid polypeptide reads, in one-letter code: MSHQRPEIFDNFAGAQVMTVDGEPQRDLNQARRIVLEMKEPLCRIPEDLRSLLSVTISVYCIETPSALVSTIIKNMPPEASIALVTGCRFLAVRDGPRGKTVTVLSTAFLSGLDESVTQQLFIHADTLLLTPEARSRISLLQDIIEDPPTSFETVGHIAHYNLREAHLPYRYFIGAVTCEKEPAITTVITKIDTVQSQYRTYNFELIGGVPRYDVKLVQDGITYSFNYTKVYWNSRLSHEHLSLAQHINQTICPNDLVLDGTCGIGPHALLLAKRFNFTNLICNDLNPDAYKSLKMNVRINKAENAITCFNEDVSSLLRRLLPETNLKAVIFSLPELSINLLQAMKGVPDIYCFLECFTRAPPHLAYYDLLLRCSESLLDTKVCTGIQQALSDIEKVAENKELIDLLIACYETFEVKEIRTVSTNKFMYRVTLKINEQKETVKVLKK.

S-adenosyl-L-methionine-binding positions include H241, 285-286 (DL), and 313-314 (DV).

This sequence belongs to the class I-like SAM-binding methyltransferase superfamily. TRM5/TYW2 family. In terms of assembly, monomer.

It is found in the mitochondrion matrix. The protein resides in the nucleus. It localises to the cytoplasm. The enzyme catalyses guanosine(37) in tRNA + S-adenosyl-L-methionine = N(1)-methylguanosine(37) in tRNA + S-adenosyl-L-homocysteine + H(+). Its function is as follows. Specifically methylates the N1 position of guanosine-37 in various cytoplasmic and mitochondrial tRNAs. Methylation is not dependent on the nature of the nucleoside 5' of the target nucleoside. This is the first step in the biosynthesis of wybutosine (yW), a modified base adjacent to the anticodon of tRNAs and required for accurate decoding. This chain is tRNA (guanine(37)-N(1))-methyltransferase, found in Giardia intestinalis (strain ATCC 50803 / WB clone C6) (Giardia lamblia).